Here is a 462-residue protein sequence, read N- to C-terminus: Probable serine/threonine-protein kinase DDB_G0286841 (462 aa).

The Protein kinase domain maps to 64–358; that stretch reads FNFLKVISKG…VDEVKCHPFF (295 aa). Residues 70–78 and Lys-93 contribute to the ATP site; that span reads ISKGGFGKV. Asp-188 functions as the Proton acceptor in the catalytic mechanism. The 104-residue stretch at 359 to 462 folds into the AGC-kinase C-terminal domain; the sequence is SEINWKIYED…LFIDFDFPTY (104 aa). Over residues 414–439 the composition is skewed to low complexity; it reads NIYKNNNNNNNNNNNNNNNNNNNNNN. Residues 414 to 447 form a disordered region; the sequence is NIYKNNNNNNNNNNNNNNNNNNNNNNDDNDDENN.

Belongs to the protein kinase superfamily. AGC Ser/Thr protein kinase family.

It catalyses the reaction L-seryl-[protein] + ATP = O-phospho-L-seryl-[protein] + ADP + H(+). The catalysed reaction is L-threonyl-[protein] + ATP = O-phospho-L-threonyl-[protein] + ADP + H(+). The polypeptide is Probable serine/threonine-protein kinase DDB_G0286841 (Dictyostelium discoideum (Social amoeba)).